The following is a 197-amino-acid chain: MHQNPRLILASSSRYRRAMLERLRLPFESISPDVDETPQAGEAPAALALRLSVAKAMAVARLHPGCIVIGSDQVATVDGQPIGKPGDFARAKSQLRQLSGRIVEFHSALAVTDGQRTEQADVITYCEFRPLTDAAIDAYLRAEEPYDTAGSAKAEGLGITLMESMRSDDPTAIIGLPLIALTGMLRRFGLDPLRSPS.

Catalysis depends on D72, which acts as the Proton acceptor.

It belongs to the Maf family. YceF subfamily. The cofactor is a divalent metal cation.

The protein resides in the cytoplasm. The catalysed reaction is N(7)-methyl-GTP + H2O = N(7)-methyl-GMP + diphosphate + H(+). Functionally, nucleoside triphosphate pyrophosphatase that hydrolyzes 7-methyl-GTP (m(7)GTP). May have a dual role in cell division arrest and in preventing the incorporation of modified nucleotides into cellular nucleic acids. The sequence is that of 7-methyl-GTP pyrophosphatase from Bordetella avium (strain 197N).